We begin with the raw amino-acid sequence, 475 residues long: NADH-quinone oxidoreductase subunit N (475 aa).

14 helical membrane-spanning segments follow: residues 7 to 27 (ISIAAPEALLIGVALIGVLLG), 40 to 60 (LLGALALAGAAFLAASQSAVD), 74 to 94 (FIAIAKAVSYGVGAIALLVAG), 105 to 125 (FEYTLLVMFGSAGMGVMLSAN), 127 to 147 (LMTLYMGIETLSLSSYVLAAF), 161 to 181 (YFVLGALASGLLLFGCSLVYG), 191 to 211 (IAAADQSIGLTFGLVLILMAL), 242 to 262 (APKLATVAVLANIMFTVFGVY), 266 to 286 (WMLIIAIVSAISMLVGAFGGL), 295 to 315 (LAYSSIANVGYALMGVAAGEV), 321 to 341 (VLTYMTIYVITTLGMFGIVLA), 365 to 385 (LAVAMTVLVFSVAGIPPMAGF), 399 to 419 (ELYWLVAVGVIGSVVSLGYYL), and 448 to 468 (GATILAFPVLVIWIGWMTGII).

Belongs to the complex I subunit 2 family. In terms of assembly, NDH-1 is composed of 14 different subunits. Subunits NuoA, H, J, K, L, M, N constitute the membrane sector of the complex.

Its subcellular location is the cell inner membrane. The catalysed reaction is a quinone + NADH + 5 H(+)(in) = a quinol + NAD(+) + 4 H(+)(out). Functionally, NDH-1 shuttles electrons from NADH, via FMN and iron-sulfur (Fe-S) centers, to quinones in the respiratory chain. The immediate electron acceptor for the enzyme in this species is believed to be ubiquinone. Couples the redox reaction to proton translocation (for every two electrons transferred, four hydrogen ions are translocated across the cytoplasmic membrane), and thus conserves the redox energy in a proton gradient. This chain is NADH-quinone oxidoreductase subunit N, found in Hirschia baltica (strain ATCC 49814 / DSM 5838 / IFAM 1418).